Here is a 288-residue protein sequence, read N- to C-terminus: Pantothenate synthetase (288 aa).

27-34 contributes to the ATP binding site; it reads MGALHEGH. Catalysis depends on His34, which acts as the Proton donor. (R)-pantoate contacts are provided by Gln58 and Gln150. Gln58 is a beta-alanine binding site. Residues Leu173 and 181–184 contribute to the ATP site; that span reads YSSR.

The protein belongs to the pantothenate synthetase family. In terms of assembly, homodimer.

The protein resides in the cytoplasm. The catalysed reaction is (R)-pantoate + beta-alanine + ATP = (R)-pantothenate + AMP + diphosphate + H(+). The protein operates within cofactor biosynthesis; (R)-pantothenate biosynthesis; (R)-pantothenate from (R)-pantoate and beta-alanine: step 1/1. Catalyzes the condensation of pantoate with beta-alanine in an ATP-dependent reaction via a pantoyl-adenylate intermediate. In Tropheryma whipplei (strain TW08/27) (Whipple's bacillus), this protein is Pantothenate synthetase.